The sequence spans 301 residues: Haloalkane dehalogenase (301 aa).

Asp123 (nucleophile) is an active-site residue. Asp250 functions as the Proton donor in the catalytic mechanism. The active-site Proton acceptor is His279.

The protein belongs to the haloalkane dehalogenase family. Type 1 subfamily. Monomer.

It carries out the reaction 1-haloalkane + H2O = a halide anion + a primary alcohol + H(+). In terms of biological role, catalyzes hydrolytic cleavage of carbon-halogen bonds in halogenated aliphatic compounds, leading to the formation of the corresponding primary alcohols, halide ions and protons. This Phenylobacterium zucineum (strain HLK1) protein is Haloalkane dehalogenase.